Reading from the N-terminus, the 250-residue chain is 2,3-bisphosphoglycerate-dependent phosphoglycerate mutase (250 aa).

Substrate-binding positions include 8–15 (RHGQSAWN), 21–22 (TG), Arg60, 87–90 (ERHY), Lys98, 114–115 (RR), and 183–184 (GN). His9 (tele-phosphohistidine intermediate) is an active-site residue. Glu87 serves as the catalytic Proton donor/acceptor.

Belongs to the phosphoglycerate mutase family. BPG-dependent PGAM subfamily. Homodimer.

It carries out the reaction (2R)-2-phosphoglycerate = (2R)-3-phosphoglycerate. Its pathway is carbohydrate degradation; glycolysis; pyruvate from D-glyceraldehyde 3-phosphate: step 3/5. Catalyzes the interconversion of 2-phosphoglycerate and 3-phosphoglycerate. The polypeptide is 2,3-bisphosphoglycerate-dependent phosphoglycerate mutase (Nitratidesulfovibrio vulgaris (strain ATCC 29579 / DSM 644 / CCUG 34227 / NCIMB 8303 / VKM B-1760 / Hildenborough) (Desulfovibrio vulgaris)).